The sequence spans 368 residues: Cell division protein FtsZ 1 (368 aa).

GTP-binding positions include 52–56 (GGGCN), 139–141 (GTG), Glu170, Arg174, and Asp217.

It belongs to the FtsZ family. Homodimer. Polymerizes to form a dynamic ring structure in a strictly GTP-dependent manner. Interacts directly with several other division proteins.

It is found in the cytoplasm. In terms of biological role, essential cell division protein that forms a contractile ring structure (Z ring) at the future cell division site. The regulation of the ring assembly controls the timing and the location of cell division. One of the functions of the FtsZ ring is to recruit other cell division proteins to the septum to produce a new cell wall between the dividing cells. Binds GTP and shows GTPase activity. This is Cell division protein FtsZ 1 from Archaeoglobus fulgidus (strain ATCC 49558 / DSM 4304 / JCM 9628 / NBRC 100126 / VC-16).